The following is a 24-amino-acid chain: Humanin-like 1 (24 aa).

The protein belongs to the humanin family. In terms of tissue distribution, highly expressed in the kidney, heart muscle and testis.

The protein localises to the secreted. Its subcellular location is the cytoplasm. In terms of biological role, plays a role as a neuroprotective and antiapoptotic factor. In Homo sapiens (Human), this protein is Humanin-like 1.